Consider the following 400-residue polypeptide: 3-phenylpropionate/cinnamic acid dioxygenase ferredoxin--NAD(+) reductase component (400 aa).

An FAD-binding site is contributed by Thr5–Asp36. Position 146-174 (Ser146–Glu174) interacts with NAD(+).

The protein belongs to the bacterial ring-hydroxylating dioxygenase ferredoxin reductase family. In terms of assembly, this dioxygenase system consists of four proteins: the two subunits of the hydroxylase component (HcaE and HcaF), a ferredoxin (HcaC) and a ferredoxin reductase (HcaD). The cofactor is FAD.

It carries out the reaction 2 reduced [2Fe-2S]-[ferredoxin] + NAD(+) + H(+) = 2 oxidized [2Fe-2S]-[ferredoxin] + NADH. It functions in the pathway aromatic compound metabolism; 3-phenylpropanoate degradation. Its function is as follows. Part of the multicomponent 3-phenylpropionate dioxygenase, that converts 3-phenylpropionic acid (PP) and cinnamic acid (CI) into 3-phenylpropionate-dihydrodiol (PP-dihydrodiol) and cinnamic acid-dihydrodiol (CI-dihydrodiol), respectively. The sequence is that of 3-phenylpropionate/cinnamic acid dioxygenase ferredoxin--NAD(+) reductase component from Escherichia coli (strain K12 / MC4100 / BW2952).